A 174-amino-acid chain; its full sequence is Cathepsin B-like cysteine proteinase 3 (174 aa).

2 disulfide bridges follow: C22-C55 and C30-C42. Catalysis depends on residues H122 and N142.

The protein belongs to the peptidase C1 family.

Expression of the protease correlates with blood-feeding and suggests a role for the protease in blood digestion. This chain is Cathepsin B-like cysteine proteinase 3 (CP-3), found in Ostertagia ostertagi (Brown stomach worm).